Reading from the N-terminus, the 435-residue chain is MGCSLNNNSQDDYVSFVIKEEEASCEEGNQSDCSINPLTEPIQGTDTPTPNMLYSLVRDFLKTNGNKYDENANTSAHFSRNRDSDKHERTHTGKKLHSCSQCGKCFSSSSDLLAHRRQSHTREKPFSCSECGKCFSFRSRLIDHQRTHTGEKPFCCFQCGKSFSVRSRFLDHRRTHTGEKPFSCLECGKCFLFRSRLLEHQRTHTGEKPFSCLKCGKCFSVRSRLKDHQRTHTGEKPFSCLECGKSFSFRPCLIDHQRTHTGEKPFSCFQCGKCFSFQSRLINHQRTHTGEKPFSCSECGKSFSNQSCLRVHQRTHTGEKPYSCSECGKSFVTSSQLAVHRRRTHTGEKPFSCSECGKCFSNQSCLRVHQRTHTGENLFSCSECGKSFVTSSKLASHQRQTHTGEKPVSCSECGKCFTRKRSLKVHFKIHTGGKP.

The disordered stretch occupies residues 71-92 (NANTSAHFSRNRDSDKHERTHT). Positions 80–91 (RNRDSDKHERTH) are enriched in basic and acidic residues. C2H2-type zinc fingers lie at residues 97–120 (HSCSQCGKCFSSSSDLLAHRRQSH), 126–148 (FSCSECGKCFSFRSRLIDHQRTH), 154–176 (FCCFQCGKSFSVRSRFLDHRRTH), 182–204 (FSCLECGKCFLFRSRLLEHQRTH), 210–232 (FSCLKCGKCFSVRSRLKDHQRTH), 238–260 (FSCLECGKSFSFRPCLIDHQRTH), 266–288 (FSCFQCGKCFSFQSRLINHQRTH), 294–316 (FSCSECGKSFSNQSCLRVHQRTH), 322–345 (YSCSECGKSFVTSSQLAVHRRRTH), 351–373 (FSCSECGKCFSNQSCLRVHQRTH), 379–402 (FSCSECGKSFVTSSKLASHQRQTH), and 408–430 (VSCSECGKCFTRKRSLKVHFKIH).

Belongs to the krueppel C2H2-type zinc-finger protein family.

It is found in the nucleus. Functionally, may be involved in transcriptional regulation. The chain is Oocyte zinc finger protein XlCOF22 from Xenopus laevis (African clawed frog).